We begin with the raw amino-acid sequence, 502 residues long: High affinity nitrate transporter 2.5 (502 aa).

12 helical membrane-spanning segments follow: residues 51 to 71 (WFQF…LPVI), 87 to 107 (IASV…CDLF), 111 to 131 (LASA…AGIK), 133 to 153 (PIGF…FVST), 172 to 192 (IAAG…PIVF), 208 to 228 (IAFF…LLFG), 264 to 284 (WITA…DNII), 300 to 320 (GIIA…GGIF), 334 to 354 (LWAW…LGQI), 361 to 381 (IIVM…TFGV), 393 to 413 (VSGM…LIFF), and 423 to 443 (GITL…LIYF). A disordered region spans residues 477 to 502 (LHIGSQKFAETSISERGRATTTHPQT).

The protein belongs to the major facilitator superfamily. Nitrate/nitrite porter (TC 2.A.1.8) family. Oligomeric molecular complex with NRT3.1. Expressed in roots, shoots and seeds. Expressed in leaves. Expressed in root hair zone of the primary root and the lateral roots, but not in the lateral root tip or in older parts of the roots. Detected mainly in the epidermis and the cortex. Expressed in shoots only in higher-order veins.

The protein resides in the cell membrane. In terms of biological role, nitrate transporter involved in the constitutive high-affinity transport system (cHATS) under long-term N starvation conditions. Predominantly expressed in roots of nitrate-deprived plants as a 150 kDa molecular complex with NRT3.1 representing the major contributor to cHATS influx. The principal role of this cHATS is to enable roots previously deprived of nitrate to absorb this ion and initiate induction of nitrate-inducible genes. Not involved in transfer of nitrate from roots to shoots. Contributes to phloem loading of nitrate in shoots during N starvation, but not required for growth and nitrate uptake in young plants. Required for the nitrate uptake-independent plant growth promotion and lateral root response to the rhizospheric Phyllobacterium. Might be involved in the transfer of nitrate from stored pools to cytoplasm. This Arabidopsis thaliana (Mouse-ear cress) protein is High affinity nitrate transporter 2.5 (NRT2.5).